Here is a 233-residue protein sequence, read N- to C-terminus: Ribonuclease 3 (233 aa).

Residues 5-127 (LERLCRKLGY…VIGAVYLDGG (123 aa)) enclose the RNase III domain. Glu40 contributes to the Mg(2+) binding site. Residue Asp44 is part of the active site. Mg(2+)-binding residues include Asp113 and Glu116. Residue Glu116 is part of the active site. Residues 156–226 (DPKTRLQEYL…ATRALALLLA (71 aa)) enclose the DRBM domain.

It belongs to the ribonuclease III family. In terms of assembly, homodimer. It depends on Mg(2+) as a cofactor.

The protein resides in the cytoplasm. The enzyme catalyses Endonucleolytic cleavage to 5'-phosphomonoester.. Its function is as follows. Digests double-stranded RNA. Involved in the processing of primary rRNA transcript to yield the immediate precursors to the large and small rRNAs (23S and 16S). Processes some mRNAs, and tRNAs when they are encoded in the rRNA operon. Processes pre-crRNA and tracrRNA of type II CRISPR loci if present in the organism. This Nitrosococcus oceani (strain ATCC 19707 / BCRC 17464 / JCM 30415 / NCIMB 11848 / C-107) protein is Ribonuclease 3.